We begin with the raw amino-acid sequence, 197 residues long: Rac-like GTP-binding protein ARAC1 (197 aa).

13 to 20 is a GTP binding site; the sequence is GDGAVGKT. The Effector region signature appears at 35 to 43; sequence YVPTVFDNF. GTP contacts are provided by residues 60 to 64 and 118 to 121; these read DTAGQ and TKLD. Residue Cys194 is modified to Cysteine methyl ester. Cys194 carries S-geranylgeranyl cysteine lipidation. Residues 195–197 constitute a propeptide, removed in mature form; sequence SIL.

Belongs to the small GTPase superfamily. Rho family. As to quaternary structure, interacts with SPK1. As to expression, ubiquitous.

Its subcellular location is the cytoplasm. It is found in the membrane. In terms of biological role, inactive GDP-bound Rho GTPases reside in the cytosol, are found in a complex with Rho GDP-dissociation inhibitors (Rho GDIs), and are released from the GDI protein in order to translocate to membranes upon activation. In Arabidopsis thaliana (Mouse-ear cress), this protein is Rac-like GTP-binding protein ARAC1 (ARAC1).